The chain runs to 828 residues: Periplasmic nitrate reductase (828 aa).

The segment at residues 1–31 is a signal peptide (tat-type signal); sequence MKLSRRHFMKANAVAAAAAVAGITIPIAVRA. One can recognise a 4Fe-4S Mo/W bis-MGD-type domain in the interval 39 to 95; the sequence is IHWDKAPCRFCGVGCGVLVGTQNGRIVASQGDPEAPVNRGLNCIKGYFLPKIMYGQD. [4Fe-4S] cluster-binding residues include Cys-46, Cys-49, Cys-53, and Cys-81. Mo-bis(molybdopterin guanine dinucleotide)-binding positions include Lys-83, Gln-150, Asn-175, Cys-179, 212–219, 243–247, 262–264, Met-372, Gln-376, Asn-482, 508–509, Lys-531, Asp-558, and 718–727; these read WGSNMAEM, STYQH, QTD, SD, and TGRVLEHWHT. Substrate is bound at residue Phe-794. Positions 802 and 819 each coordinate Mo-bis(molybdopterin guanine dinucleotide).

The protein belongs to the prokaryotic molybdopterin-containing oxidoreductase family. NasA/NapA/NarB subfamily. Component of the periplasmic nitrate reductase NapAB complex composed of NapA and NapB. It depends on [4Fe-4S] cluster as a cofactor. Mo-bis(molybdopterin guanine dinucleotide) serves as cofactor. Post-translationally, predicted to be exported by the Tat system. The position of the signal peptide cleavage has not been experimentally proven.

The protein localises to the periplasm. It catalyses the reaction 2 Fe(II)-[cytochrome] + nitrate + 2 H(+) = 2 Fe(III)-[cytochrome] + nitrite + H2O. In terms of biological role, catalytic subunit of the periplasmic nitrate reductase complex NapAB. Receives electrons from NapB and catalyzes the reduction of nitrate to nitrite. This is Periplasmic nitrate reductase from Pectobacterium atrosepticum (strain SCRI 1043 / ATCC BAA-672) (Erwinia carotovora subsp. atroseptica).